The following is a 244-amino-acid chain: CTD nuclear envelope phosphatase 1 (244 aa).

A helical membrane pass occupies residues 7 to 29; it reads LLGLRTFVAFAAKLWSFFIYLLR. The region spanning 57-224 is the FCP1 homology domain; sequence AQVKRKILVL…LNLLPMLDAL (168 aa).

The protein belongs to the dullard family. In terms of assembly, (Microbial infection) Interacts with Chandipura virus matrix protein. As to quaternary structure, interacts with CNEP1R1; the complex dephosphorylates LPIN1 and LPIN2. As to expression, muscle specific with lower expression in other metabolic tissues.

It localises to the endoplasmic reticulum membrane. The protein localises to the nucleus membrane. It carries out the reaction O-phospho-L-seryl-[protein] + H2O = L-seryl-[protein] + phosphate. The enzyme catalyses O-phospho-L-threonyl-[protein] + H2O = L-threonyl-[protein] + phosphate. Its function is as follows. Serine/threonine protein phosphatase forming with CNEP1R1 an active phosphatase complex that dephosphorylates and may activate LPIN1 and LPIN2. LPIN1 and LPIN2 are phosphatidate phosphatases that catalyze the conversion of phosphatidic acid to diacylglycerol and control the metabolism of fatty acids at different levels. May indirectly modulate the lipid composition of nuclear and/or endoplasmic reticulum membranes and be required for proper nuclear membrane morphology and/or dynamics. May also indirectly regulate the production of lipid droplets and triacylglycerol. May antagonize BMP signaling. This Homo sapiens (Human) protein is CTD nuclear envelope phosphatase 1 (CTDNEP1).